The sequence spans 320 residues: tRNA(Ile)-lysidine synthase, chloroplastic (320 aa).

31–36 (SGGKDS) contacts ATP.

The protein belongs to the tRNA(Ile)-lysidine synthase family.

It localises to the plastid. The protein resides in the chloroplast. It carries out the reaction cytidine(34) in tRNA(Ile2) + L-lysine + ATP = lysidine(34) in tRNA(Ile2) + AMP + diphosphate + H(+). In terms of biological role, ligates lysine onto the cytidine present at position 34 of the AUA codon-specific tRNA(Ile) that contains the anticodon CAU, in an ATP-dependent manner. Cytidine is converted to lysidine, thus changing the amino acid specificity of the tRNA from methionine to isoleucine. In Gracilaria tenuistipitata var. liui (Red alga), this protein is tRNA(Ile)-lysidine synthase, chloroplastic.